A 178-amino-acid chain; its full sequence is Large ribosomal subunit protein uL6 (178 aa).

It belongs to the universal ribosomal protein uL6 family. In terms of assembly, part of the 50S ribosomal subunit.

In terms of biological role, this protein binds to the 23S rRNA, and is important in its secondary structure. It is located near the subunit interface in the base of the L7/L12 stalk, and near the tRNA binding site of the peptidyltransferase center. This is Large ribosomal subunit protein uL6 from Thermobifida fusca (strain YX).